The sequence spans 562 residues: Formate--tetrahydrofolate ligase (562 aa).

71–78 (TPAGEGKS) is an ATP binding site.

Belongs to the formate--tetrahydrofolate ligase family.

The catalysed reaction is (6S)-5,6,7,8-tetrahydrofolate + formate + ATP = (6R)-10-formyltetrahydrofolate + ADP + phosphate. It participates in one-carbon metabolism; tetrahydrofolate interconversion. In Bacillus thuringiensis (strain Al Hakam), this protein is Formate--tetrahydrofolate ligase.